The sequence spans 138 residues: Basic phospholipase A2 Tbo-G6D49 (138 aa).

The N-terminal stretch at 1–16 (MRTLWIMAVLLVGVEG) is a signal peptide. Intrachain disulfides connect C42–C131, C44–C60, C59–C111, C65–C138, C66–C104, C73–C97, and C91–C102. Ca(2+) is bound by residues Y43, G45, and G47. H63 is a catalytic residue. D64 contacts Ca(2+). D105 is an active-site residue.

Monomer. It depends on Ca(2+) as a cofactor. As to expression, expressed by the venom gland.

The protein resides in the secreted. The enzyme catalyses a 1,2-diacyl-sn-glycero-3-phosphocholine + H2O = a 1-acyl-sn-glycero-3-phosphocholine + a fatty acid + H(+). Functionally, snake venom phospholipase A2 (PLA2) that impairs hemostasis. It weakly inhibits ADP-induced platelet aggregation when tested on platelet rich plasma from human and rabbit blood (15-25% of inhibition at 5-10 ug of enzyme), and dose-dependently inhibits blood coagulation, possibly by inhibiting thrombin activation. Exhibits strong hydrolytic activities toward L-dipalmitoyl phosphatidylcholine. PLA2 catalyzes the calcium-dependent hydrolysis of the 2-acyl groups in 3-sn-phosphoglycerides. In Craspedocephalus borneensis (Borneo pit viper), this protein is Basic phospholipase A2 Tbo-G6D49.